The following is a 200-amino-acid chain: Recombination protein RecR (200 aa).

The segment at 59–74 adopts a C4-type zinc-finger fold; sequence CDICGNVCESSPCPVC. One can recognise a Toprim domain in the interval 82–177; that stretch reads SVICVVEEPK…KVTRLASGLP (96 aa).

It belongs to the RecR family.

Functionally, may play a role in DNA repair. It seems to be involved in an RecBC-independent recombinational process of DNA repair. It may act with RecF and RecO. The sequence is that of Recombination protein RecR from Bifidobacterium longum subsp. infantis (strain ATCC 15697 / DSM 20088 / JCM 1222 / NCTC 11817 / S12).